The following is a 534-amino-acid chain: uncharacterized protein (534 aa).

A signal peptide spans 1–22; that stretch reads MGLRLLFSLICVFCISNIFTQA. N-linked (GlcNAc...) asparagine glycosylation is present at Asn-31. Disordered stretches follow at residues 70 to 145 and 176 to 418; these read PTYY…SSVS and SSLS…SSAP. Asn-426 carries an N-linked (GlcNAc...) asparagine glycan.

Its subcellular location is the endoplasmic reticulum. It is found in the cell membrane. This is an uncharacterized protein from Schizosaccharomyces pombe (strain 972 / ATCC 24843) (Fission yeast).